A 586-amino-acid chain; its full sequence is Ezrin (586 aa).

In terms of domain architecture, FERM spans 2–295 (PKPINVRVTT…GNHELYMRRR (294 aa)). Residue Lys-60 is modified to N6-acetyllysine. The [IL]-x-C-x-x-[DE] motif motif lies at 115 to 120 (IYCPPE). Tyr-146 carries the post-translational modification Phosphotyrosine; by PDGFR. Positions 244-586 (EIRNISFNDK…KQRIDEFEAM (343 aa)) are interaction with SCYL3. The stretch at 302–462 (VQQMKAQARE…QDDLVKTKEE (161 aa)) forms a coiled coil. Positions 306–338 (KAQAREEKHQKQLERQQLETEKKRRETVEREKE) are disordered. Over residues 308–338 (QAREEKHQKQLERQQLETEKKRRETVEREKE) the composition is skewed to basic and acidic residues. Position 354 is a phosphotyrosine; by PDGFR (Tyr-354). At Ser-366 the chain carries Phosphoserine. Tyr-478 carries the post-translational modification Phosphotyrosine. A disordered region spans residues 534–565 (LSNELSQARDENKRTHNDIIHNENMRQGRDKY). At Ser-535 the chain carries Phosphoserine. Positions 540–565 (QARDENKRTHNDIIHNENMRQGRDKY) are enriched in basic and acidic residues. The residue at position 567 (Thr-567) is a Phosphothreonine; by ROCK2 and PKC/PRKCI.

As to quaternary structure, interacts with PALS1 and NHERF2. Found in a complex with EZR, PODXL and NHERF2. Interacts with MCC, PLEKHG6, PODXL, SCYL3/PACE1, NHERF1 and TMEM8B. Interacts (when phosphorylated) with FES/FPS. Interacts with dimeric S100P, the interaction may be activating through unmasking of F-actin binding sites. Identified in complexes that contain VIM, EZR, AHNAK, BFSP1, BFSP2, ANK2, PLEC, PRX and spectrin. Detected in a complex composed of at least EZR, AHNAK, PPL and PRX. Interacts with PDPN (via cytoplasmic domain); activates RHOA and promotes epithelial-mesenchymal transition. Interacts with SPN/CD43 cytoplasmic tail. Interacts with CD44 and ICAM2. Interacts with SLC9A3; interaction targets SLC9A3 to the apical membrane. Interacts with SLC9A1; regulates interactions of SLC9A1 with cytoskeletal and promotes stress fiber formation. Interacts with CLIC5; may work together in a complex which also includes RDX and MYO6 to stabilize linkages between the plasma membrane and subjacent actin cytoskeleton at the base of stereocilia. Post-translationally, phosphorylated by tyrosine-protein kinases. Phosphorylation by ROCK2 suppresses the head-to-tail association of the N-terminal and C-terminal halves resulting in an opened conformation which is capable of actin and membrane-binding. S-nitrosylation is induced by interferon-gamma and oxidatively-modified low-densitity lipoprotein (LDL(ox)) possibly implicating the iNOS-S100A8/9 transnitrosylase complex. As to expression, detected in eye lens fiber cells. Expressed in cerebrum and cerebellum (at protein level). Component of the microvilli of intestinal epithelial cells.

It is found in the apical cell membrane. The protein resides in the cell projection. The protein localises to the microvillus membrane. It localises to the ruffle membrane. Its subcellular location is the cytoplasm. It is found in the cell cortex. The protein resides in the cytoskeleton. The protein localises to the microvillus. A head-to-tail association, of the N-terminal and C-terminal halves results in a closed conformation (inactive form) which is incapable of actin or membrane-binding. In terms of biological role, probably involved in connections of major cytoskeletal structures to the plasma membrane. In epithelial cells, required for the formation of microvilli and membrane ruffles on the apical pole. Along with PLEKHG6, required for normal macropinocytosis. The sequence is that of Ezrin (Ezr) from Mus musculus (Mouse).